The primary structure comprises 190 residues: Protein LZIC (190 aa).

Positions 2–63 form a coiled coil; that stretch reads ASRGKTETSK…SEFNDSLKKI (62 aa).

This sequence belongs to the CTNNBIP1 family. As to quaternary structure, does not interact with CTNNB1.

This Mus musculus (Mouse) protein is Protein LZIC (Lzic).